The following is a 949-amino-acid chain: ATPase 5, plasma membrane-type (949 aa).

N-acetylserine is present on Ser-2. At 2–61 (SELDHIKNESVDLVRIPMEEVFEELKCTKQGLTANEASHRLDVFGPNKLEEKKESKLLKF) the chain is on the cytoplasmic side. Residues 62 to 81 (LGFMWNPLSWVMEVAALMAI) form a helical membrane-spanning segment. Residues 82–93 (ALANGGGRPPDW) are Extracellular-facing. The helical transmembrane segment at 94-114 (QDFVGIVCLLLINSTISFIEE) threads the bilayer. At 115–243 (NNAGNAAAAL…GHFQKVLTSI (129 aa)) the chain is on the cytoplasmic side. A helical membrane pass occupies residues 244 to 264 (GNFCICSIALGIIVELLVMYP). Over 265–273 (IQRRRYRDG) the chain is Extracellular. The helical transmembrane segment at 274-291 (IDNLLVLLIGGIPIAMPS) threads the bilayer. Residues 292–643 (VLSVTMATGS…TSRAIFQRMK (352 aa)) lie on the Cytoplasmic side of the membrane. The 4-aspartylphosphate intermediate role is filled by Asp-329. Positions 588 and 592 each coordinate Mg(2+). Residues 644–665 (NYTIYAVSITIRIVFGFMFIAL) form a helical membrane-spanning segment. Topologically, residues 666–670 (IWQFD) are extracellular. Residues 671–693 (FSPFMVLIIAILNDGTIMTISKD) traverse the membrane as a helical segment. Over 694–709 (RMKPSPQPDSWKLRDI) the chain is Cytoplasmic. Residues 710 to 730 (FSTGVVLGGYQALMTVVFFWV) form a helical membrane-spanning segment. The Extracellular portion of the chain corresponds to 731–751 (MKDSDFFSNYFGVRPLSQRPE). The chain crosses the membrane as a helical span at residues 752–772 (QMMAALYLQVSIISQALIFVT). Over 773-784 (RSRSWSYAECPG) the chain is Cytoplasmic. Residues 785 to 805 (LLLLGAFVIAQLVATFIAVYA) traverse the membrane as a helical segment. At 806–813 (NWSFARIE) the chain is on the extracellular side. Residues 814-834 (GAGWGWAGVIWLYSFLTYIPL) form a helical membrane-spanning segment. The Cytoplasmic segment spans residues 835 to 949 (DLLKFGIRYV…IDTIQQHYTV (115 aa)). Thr-881 is subject to Phosphothreonine. Phosphoserine is present on residues Ser-899 and Ser-931. Residues 947–949 (YTV) form an interaction with 14-3-3 proteins region. Thr-948 carries the post-translational modification Phosphothreonine.

This sequence belongs to the cation transport ATPase (P-type) (TC 3.A.3) family. Type IIIA subfamily. Binds to 14-3-3 proteins. The binding is induced by phosphorylation of Thr-948. Binding to 14-3-3 proteins activates the H(+)-ATPase. As to expression, expressed in guard cells and leaves.

It is found in the membrane. It carries out the reaction ATP + H2O + H(+)(in) = ADP + phosphate + 2 H(+)(out). In terms of biological role, the plasma membrane H(+) ATPase of plants and fungi generates a proton gradient that drives the active transport of nutrients by H(+)-symport. The resulting external acidification and/or internal alkinization may mediate growth responses. This Arabidopsis thaliana (Mouse-ear cress) protein is ATPase 5, plasma membrane-type (AHA5).